Here is a 240-residue protein sequence, read N- to C-terminus: MEKKNCNPKETSSQKASDKNHLTLKNSLLKDIDFYLVTDSGLSKKGTLSDVKESVEAGCKIVQYREKCKSTGEMIDEAAEIKKICSGRAIFLINDRIDVALVVDADGVHIGQDDMPIETARKILGANKIIGLTVHNADEAIEAEKSGADYVGLGSIFDTFTKKDAGKGIGPASIREVRNAIKISVVAIGGINKENCRSVIENGADSLVAISAVVCSDDVKKETREFIDIIREIKGTGSSK.

Residues 63-67 (QYREK) and asparagine 94 contribute to the 4-amino-2-methyl-5-(diphosphooxymethyl)pyrimidine site. Positions 95 and 114 each coordinate Mg(2+). A 4-amino-2-methyl-5-(diphosphooxymethyl)pyrimidine-binding site is contributed by threonine 133. 159 to 161 (TFT) serves as a coordination point for 2-[(2R,5Z)-2-carboxy-4-methylthiazol-5(2H)-ylidene]ethyl phosphate. Position 162 (lysine 162) interacts with 4-amino-2-methyl-5-(diphosphooxymethyl)pyrimidine. 2-[(2R,5Z)-2-carboxy-4-methylthiazol-5(2H)-ylidene]ethyl phosphate is bound by residues glycine 190 and 210–211 (IS).

The protein belongs to the thiamine-phosphate synthase family. Mg(2+) is required as a cofactor.

The enzyme catalyses 2-[(2R,5Z)-2-carboxy-4-methylthiazol-5(2H)-ylidene]ethyl phosphate + 4-amino-2-methyl-5-(diphosphooxymethyl)pyrimidine + 2 H(+) = thiamine phosphate + CO2 + diphosphate. It carries out the reaction 2-(2-carboxy-4-methylthiazol-5-yl)ethyl phosphate + 4-amino-2-methyl-5-(diphosphooxymethyl)pyrimidine + 2 H(+) = thiamine phosphate + CO2 + diphosphate. The catalysed reaction is 4-methyl-5-(2-phosphooxyethyl)-thiazole + 4-amino-2-methyl-5-(diphosphooxymethyl)pyrimidine + H(+) = thiamine phosphate + diphosphate. It participates in cofactor biosynthesis; thiamine diphosphate biosynthesis; thiamine phosphate from 4-amino-2-methyl-5-diphosphomethylpyrimidine and 4-methyl-5-(2-phosphoethyl)-thiazole: step 1/1. Its function is as follows. Condenses 4-methyl-5-(beta-hydroxyethyl)thiazole monophosphate (THZ-P) and 2-methyl-4-amino-5-hydroxymethyl pyrimidine pyrophosphate (HMP-PP) to form thiamine monophosphate (TMP). The protein is Thiamine-phosphate synthase of Methanosarcina mazei (strain ATCC BAA-159 / DSM 3647 / Goe1 / Go1 / JCM 11833 / OCM 88) (Methanosarcina frisia).